Reading from the N-terminus, the 823-residue chain is Putative ankyrin repeat domain-containing protein 20A3 (823 aa).

5 ANK repeats span residues 66 to 95 (QHRTALHLACASGHVQVVTLLVNRKCQIDV), 99 to 128 (ENRTPLIQAVHCQEEACAVILLEHGANPNL), 132 to 161 (YGNTALHYAVYSESTSLAEKLLSHGAHIEA), 165 to 194 (DNNTPLLFAIICKKEKMVEFLLKRKASSHA), and 198 to 227 (LRRSALMLAVYYDSPGIVNILLKQNIDVFA). Disordered stretches follow at residues 301 to 343 (VPEK…EVED) and 355 to 402 (VQTL…LSEN). Residues 372–384 (QERHERSEKKQPQ) are compositionally biased toward basic and acidic residues. 3 coiled-coil regions span residues 431 to 480 (KKLK…KQLE), 571 to 724 (AFRY…NNST), and 776 to 805 (LVLEEKSKKLMNECDHLKESLFQYEREKTE).

The protein is Putative ankyrin repeat domain-containing protein 20A3 of Homo sapiens (Human).